Here is a 331-residue protein sequence, read N- to C-terminus: Cytosolic Fe-S cluster assembly factor NBP35 (331 aa).

Over residues 1–10 (MSPSQTQIEK) the composition is skewed to polar residues. Residues 1–32 (MSPSQTQIEKSQLAAPEPEHCPGPESELAGQG) form a disordered region. The [4Fe-4S] cluster site is built by C21, C35, C38, and C44. 75–82 (GKGGVGKS) is an ATP binding site. Residues C249 and C252 each coordinate [4Fe-4S] cluster.

Belongs to the Mrp/NBP35 ATP-binding proteins family. NUBP1/NBP35 subfamily. Heterotetramer of 2 NBP35 and 2 CFD1 chains. [4Fe-4S] cluster is required as a cofactor.

The protein localises to the cytoplasm. Its subcellular location is the nucleus. Functionally, component of the cytosolic iron-sulfur (Fe/S) protein assembly (CIA) machinery. Required for maturation of extramitochondrial Fe-S proteins. The NBP35-CFD1 heterotetramer forms a Fe-S scaffold complex, mediating the de novo assembly of an Fe-S cluster and its transfer to target apoproteins. Required for biogenesis and export of both ribosomal subunits, which may reflect a role in assembly of the Fe/S clusters in RLI1, a protein which performs rRNA processing and ribosome export. The polypeptide is Cytosolic Fe-S cluster assembly factor NBP35 (Candida albicans (strain SC5314 / ATCC MYA-2876) (Yeast)).